The sequence spans 168 residues: MATEGNNLSQYDKNTIPNAKDFRFGIVVSEWNEEITEGLFQGAFDAWIENGVQKENIVRWNVPGSFELIYGCKKMQQSFEMLDAIVAVGNVIQGETKHFDFVCDGVTQGIKDLNVQTDIPVIFCVLTDNNIEQSRARSGGKHGNKGTEAAIAAIKMAQLRKDAKFYKG.

Residues Trp-31, 65-67 (SFE), and 90-92 (NVI) contribute to the 5-amino-6-(D-ribitylamino)uracil site. Residue 95-96 (ET) coordinates (2S)-2-hydroxy-3-oxobutyl phosphate. Residue His-98 is the Proton donor of the active site. Phe-123 is a binding site for 5-amino-6-(D-ribitylamino)uracil. Arg-137 contributes to the (2S)-2-hydroxy-3-oxobutyl phosphate binding site.

The protein belongs to the DMRL synthase family.

The enzyme catalyses (2S)-2-hydroxy-3-oxobutyl phosphate + 5-amino-6-(D-ribitylamino)uracil = 6,7-dimethyl-8-(1-D-ribityl)lumazine + phosphate + 2 H2O + H(+). It participates in cofactor biosynthesis; riboflavin biosynthesis; riboflavin from 2-hydroxy-3-oxobutyl phosphate and 5-amino-6-(D-ribitylamino)uracil: step 1/2. Catalyzes the formation of 6,7-dimethyl-8-ribityllumazine by condensation of 5-amino-6-(D-ribitylamino)uracil with 3,4-dihydroxy-2-butanone 4-phosphate. This is the penultimate step in the biosynthesis of riboflavin. The chain is 6,7-dimethyl-8-ribityllumazine synthase from Christiangramia forsetii (strain DSM 17595 / CGMCC 1.15422 / KT0803) (Gramella forsetii).